We begin with the raw amino-acid sequence, 233 residues long: Large ribosomal subunit protein uL22m (233 aa).

The protein belongs to the universal ribosomal protein uL22 family. As to quaternary structure, component of the mitochondrial ribosome large subunit (39S) which comprises a 16S rRNA and about 50 distinct proteins.

It is found in the mitochondrion. The sequence is that of Large ribosomal subunit protein uL22m (mRpL22) from Drosophila melanogaster (Fruit fly).